A 58-amino-acid polypeptide reads, in one-letter code: Large ribosomal subunit protein bL32c (58 aa).

The disordered stretch occupies residues 1 to 23; that stretch reads MAVPKKRTSKAKKNARKSVWKKK.

The protein belongs to the bacterial ribosomal protein bL32 family.

Its subcellular location is the plastid. It localises to the chloroplast. In Trieres chinensis (Marine centric diatom), this protein is Large ribosomal subunit protein bL32c (rpl32-A).